A 469-amino-acid polypeptide reads, in one-letter code: Glutamine synthetase (469 aa).

One can recognise a GS beta-grasp domain in the interval 16–100 (EGVQYVDLRF…MICDIYDPVT (85 aa)). The 362-residue stretch at 108–469 (TRYIAQKAEQ…PKEFELYWDI (362 aa)) folds into the GS catalytic domain. Mg(2+) is bound by residues glutamate 133 and glutamate 135. Glutamate 207 is a binding site for ATP. Residues glutamate 212 and glutamate 220 each contribute to the Mg(2+) site. L-glutamate is bound by residues 264–265 (NG) and glycine 265. Mg(2+) is bound at residue histidine 269. ATP contacts are provided by residues 271–273 (HFS) and serine 273. The L-glutamate site is built by arginine 321, glutamate 327, and arginine 339. Positions 339, 344, and 353 each coordinate ATP. Residue glutamate 358 participates in Mg(2+) binding. Arginine 360 contributes to the L-glutamate binding site. Position 398 is an O-AMP-tyrosine (tyrosine 398).

The protein belongs to the glutamine synthetase family. As to quaternary structure, oligomer of 12 subunits arranged in the form of two hexagons. The cofactor is Mg(2+).

The protein localises to the cytoplasm. It carries out the reaction L-glutamate + NH4(+) + ATP = L-glutamine + ADP + phosphate + H(+). Its activity is regulated as follows. The activity of this enzyme could be controlled by adenylation under conditions of abundant glutamine. In terms of biological role, catalyzes the ATP-dependent biosynthesis of glutamine from glutamate and ammonia. This Aquifex aeolicus (strain VF5) protein is Glutamine synthetase.